The following is a 137-amino-acid chain: Nucleoside diphosphate kinase (137 aa).

Positions 9, 57, 85, 91, and 102 each coordinate ATP. Residue H119 is the Pros-phosphohistidine intermediate of the active site.

The protein belongs to the NDK family. Homotetramer. It depends on Mg(2+) as a cofactor.

The protein resides in the cytoplasm. It carries out the reaction a 2'-deoxyribonucleoside 5'-diphosphate + ATP = a 2'-deoxyribonucleoside 5'-triphosphate + ADP. It catalyses the reaction a ribonucleoside 5'-diphosphate + ATP = a ribonucleoside 5'-triphosphate + ADP. Functionally, major role in the synthesis of nucleoside triphosphates other than ATP. The ATP gamma phosphate is transferred to the NDP beta phosphate via a ping-pong mechanism, using a phosphorylated active-site intermediate. In Streptococcus thermophilus (strain CNRZ 1066), this protein is Nucleoside diphosphate kinase.